Here is a 326-residue protein sequence, read N- to C-terminus: Pantothenate kinase (326 aa).

Residue 104–111 coordinates ATP; it reads GSVAVGKS.

It belongs to the prokaryotic pantothenate kinase family.

The protein resides in the cytoplasm. It catalyses the reaction (R)-pantothenate + ATP = (R)-4'-phosphopantothenate + ADP + H(+). It functions in the pathway cofactor biosynthesis; coenzyme A biosynthesis; CoA from (R)-pantothenate: step 1/5. The sequence is that of Pantothenate kinase from Parvibaculum lavamentivorans (strain DS-1 / DSM 13023 / NCIMB 13966).